Consider the following 226-residue polypeptide: Cytidylate kinase (226 aa).

Residue Gly10 to Thr18 participates in ATP binding.

The protein belongs to the cytidylate kinase family. Type 1 subfamily.

It is found in the cytoplasm. It catalyses the reaction CMP + ATP = CDP + ADP. The enzyme catalyses dCMP + ATP = dCDP + ADP. This is Cytidylate kinase from Caldicellulosiruptor saccharolyticus (strain ATCC 43494 / DSM 8903 / Tp8T 6331).